The following is a 213-amino-acid chain: Na(+)-translocating NADH-quinone reductase subunit D (213 aa).

6 helical membrane passes run 22–42, 43–63, 77–97, 101–121, 131–151, and 183–203; these read LIAI…TTAL, TMGF…SLLR, IIIS…FFTI, LSVF…AESM, FLDG…ISII, and LGLM…IWIV.

The protein belongs to the NqrDE/RnfAE family. Composed of six subunits; NqrA, NqrB, NqrC, NqrD, NqrE and NqrF.

It is found in the cell inner membrane. The enzyme catalyses a ubiquinone + n Na(+)(in) + NADH + H(+) = a ubiquinol + n Na(+)(out) + NAD(+). NQR complex catalyzes the reduction of ubiquinone-1 to ubiquinol by two successive reactions, coupled with the transport of Na(+) ions from the cytoplasm to the periplasm. NqrA to NqrE are probably involved in the second step, the conversion of ubisemiquinone to ubiquinol. The polypeptide is Na(+)-translocating NADH-quinone reductase subunit D (Chlamydia trachomatis serovar A (strain ATCC VR-571B / DSM 19440 / HAR-13)).